The sequence spans 607 residues: MASFSESLSQDPADAYKSAPSITKPMGPPSPGQPQWNPQRATSMPVFRYRPFAKEVEPIRLVDRTWPDRVIDCAPLWCAVDLRDGNQALIDPMSPICKRRMFDLLVRMGYKEIEVGFPSASQTDFDFVREIITDGTIPDDVTIQVLTQCRPELIERTFEACENASRVIVHFYNSTSILQRRVVFRADQATVKAIATDGARKCVEEAFKYPGTHWRFEYSPESYTGTELEYAKQVCDAVGEVIQPTPDNPIIFNLPATVEMATPNVYADSIEWMSRNLANRESVILSLHPHNDRGTAVAAAELGYHAGADRIEGCLFGNGERTGNVCLVTLGLNLFSRGVDPQIDFSNIDEIRRTVEYCNKLRVHERHPYGGDLVYTAFSGSHQDAINKGLDQMKIDADAADSDVDDILWQVPYLPIDPRDVGRTYEAVIRVNSQSGKGGVAYIMKADHGLELPRRLQIEFSRAIQKISEGEGGEITPTEMWDVFFEEYLSPVQPLERIKQRVNAAEEDGGSTSIAATVKINGEETEISGVGNGPLAAFIDALGHVGLQVAVLDYSEHAMNAGDDAQAAAYVEASVHGHTAWGVGIAPSITTASLRAVVSAVNRAMPR.

Polar residues predominate over residues 1 to 10; it reads MASFSESLSQ. A disordered region spans residues 1-40; sequence MASFSESLSQDPADAYKSAPSITKPMGPPSPGQPQWNPQR. The Pyruvate carboxyltransferase domain occupies 75 to 349; sequence PLWCAVDLRD…DPQIDFSNID (275 aa). The Mg(2+) site is built by aspartate 84, histidine 288, histidine 290, and asparagine 324. The segment at 491–607 is regulatory domain; the sequence is PVQPLERIKQ…VSAVNRAMPR (117 aa).

The protein belongs to the alpha-IPM synthase/homocitrate synthase family. LeuA type 2 subfamily. As to quaternary structure, homodimer. The cofactor is Mg(2+).

The protein localises to the cytoplasm. It carries out the reaction 3-methyl-2-oxobutanoate + acetyl-CoA + H2O = (2S)-2-isopropylmalate + CoA + H(+). It participates in amino-acid biosynthesis; L-leucine biosynthesis; L-leucine from 3-methyl-2-oxobutanoate: step 1/4. Functionally, catalyzes the condensation of the acetyl group of acetyl-CoA with 3-methyl-2-oxobutanoate (2-ketoisovalerate) to form 3-carboxy-3-hydroxy-4-methylpentanoate (2-isopropylmalate). The polypeptide is 2-isopropylmalate synthase (Mycobacterium leprae (strain TN)).